Here is an 80-residue protein sequence, read N- to C-terminus: RNA-binding protein Hfq (80 aa).

The region spanning 10–70 is the Sm domain; the sequence is DIFLNNARKE…ISTVSPAKPI (61 aa).

The protein belongs to the Hfq family. In terms of assembly, homohexamer.

Functionally, RNA chaperone that binds small regulatory RNA (sRNAs) and mRNAs to facilitate mRNA translational regulation in response to envelope stress, environmental stress and changes in metabolite concentrations. Also binds with high specificity to tRNAs. This chain is RNA-binding protein Hfq, found in Clostridium perfringens (strain SM101 / Type A).